The primary structure comprises 66 residues: Large ribosomal subunit protein bL33c (66 aa).

It belongs to the bacterial ribosomal protein bL33 family.

The protein resides in the plastid. The protein localises to the chloroplast. The sequence is that of Large ribosomal subunit protein bL33c from Adiantum capillus-veneris (Maidenhair fern).